We begin with the raw amino-acid sequence, 278 residues long: Large ribosomal subunit protein uL2 (278 aa).

The disordered stretch occupies residues 224–278 (VAMNPVDHPHGGGEGRTSGGRNPVTPWGVPTKGKKTRSNKRTDTFILSSRHNRKK).

The protein belongs to the universal ribosomal protein uL2 family. Part of the 50S ribosomal subunit. Forms a bridge to the 30S subunit in the 70S ribosome.

Functionally, one of the primary rRNA binding proteins. Required for association of the 30S and 50S subunits to form the 70S ribosome, for tRNA binding and peptide bond formation. It has been suggested to have peptidyltransferase activity; this is somewhat controversial. Makes several contacts with the 16S rRNA in the 70S ribosome. The polypeptide is Large ribosomal subunit protein uL2 (Methylorubrum extorquens (strain CM4 / NCIMB 13688) (Methylobacterium extorquens)).